The chain runs to 291 residues: Glycine--tRNA ligase alpha subunit (291 aa).

This sequence belongs to the class-II aminoacyl-tRNA synthetase family. In terms of assembly, tetramer of two alpha and two beta subunits.

It is found in the cytoplasm. It carries out the reaction tRNA(Gly) + glycine + ATP = glycyl-tRNA(Gly) + AMP + diphosphate. The chain is Glycine--tRNA ligase alpha subunit from Nitratidesulfovibrio vulgaris (strain DSM 19637 / Miyazaki F) (Desulfovibrio vulgaris).